A 407-amino-acid polypeptide reads, in one-letter code: Homeobox even-skipped homolog protein 1 (407 aa).

Disordered stretches follow at residues 29 to 120 (EAVG…SDFY) and 137 to 179 (EYQH…ACSA). The segment covering 102-114 (DSLSGQGQPSSSD) has biased composition (polar residues). The homeobox DNA-binding region spans 183–242 (MRRYRTAFTREQIARLEKEFYRENYVSRPRRCELAAALNLPETTIKVWFQNRRMKDKRQR).

Belongs to the even-skipped homeobox family.

Its subcellular location is the nucleus. Functionally, may play a role in the specification of neuronal cell types. This Homo sapiens (Human) protein is Homeobox even-skipped homolog protein 1 (EVX1).